Here is a 63-residue protein sequence, read N- to C-terminus: Period circadian protein (63 aa).

Residues 1-63 are disordered; sequence EGSGGSGSSG…VTLTESLLNK (63 aa). 2 stretches are compositionally biased toward low complexity: residues 9–31 and 39–49; these read SGNF…NAGT and SAAASGASVNA. Polar residues predominate over residues 54 to 63; that stretch reads VTLTESLLNK.

Forms a heterodimer with timeless (TIM); the complex then translocates into the nucleus. Phosphorylated with a circadian rhythmicity, probably by the double-time protein (dbt). Phosphorylation could be implicated in the stability of per monomer and in the formation of heterodimer per-tim.

It is found in the nucleus. The protein localises to the cytoplasm. Its subcellular location is the perinuclear region. Essential for biological clock functions. Determines the period length of circadian and ultradian rhythms; an increase in PER dosage leads to shortened circadian rhythms and a decrease leads to lengthened circadian rhythms. Essential for the circadian rhythmicity of locomotor activity, eclosion behavior, and for the rhythmic component of the male courtship song that originates in the thoracic nervous system. The biological cycle depends on the rhythmic formation and nuclear localization of the TIM-PER complex. Light induces the degradation of TIM, which promotes elimination of PER. Nuclear activity of the heterodimer coordinatively regulates PER and TIM transcription through a negative feedback loop. Behaves as a negative element in circadian transcriptional loop. Does not appear to bind DNA, suggesting indirect transcriptional inhibition. This Drosophila immigrans (Fruit fly) protein is Period circadian protein (per).